Here is a 597-residue protein sequence, read N- to C-terminus: Aspartate--tRNA(Asp/Asn) ligase (597 aa).

Residue E182 coordinates L-aspartate. The aspartate stretch occupies residues 206–209 (QLFK). R228 is an L-aspartate binding site. ATP contacts are provided by residues 228 to 230 (RDE) and Q237. H455 is an L-aspartate binding site. E489 lines the ATP pocket. Position 496 (R496) interacts with L-aspartate. An ATP-binding site is contributed by 541-544 (GFDR).

The protein belongs to the class-II aminoacyl-tRNA synthetase family. Type 1 subfamily. As to quaternary structure, homodimer.

Its subcellular location is the cytoplasm. The enzyme catalyses tRNA(Asx) + L-aspartate + ATP = L-aspartyl-tRNA(Asx) + AMP + diphosphate. In terms of biological role, aspartyl-tRNA synthetase with relaxed tRNA specificity since it is able to aspartylate not only its cognate tRNA(Asp) but also tRNA(Asn). Reaction proceeds in two steps: L-aspartate is first activated by ATP to form Asp-AMP and then transferred to the acceptor end of tRNA(Asp/Asn). The protein is Aspartate--tRNA(Asp/Asn) ligase of Desulfosudis oleivorans (strain DSM 6200 / JCM 39069 / Hxd3) (Desulfococcus oleovorans).